We begin with the raw amino-acid sequence, 172 residues long: HTH-type transcriptional regulator IscR (172 aa).

Residues 2-131 (RLTSKGRYAV…NNITLGELMR (130 aa)) form the HTH rrf2-type domain. A DNA-binding region (H-T-H motif) is located at residues 28–51 (LADISERQGISLSYLEQLFSRLRK). Positions 92, 98, and 104 each coordinate [2Fe-2S] cluster.

[2Fe-2S] cluster is required as a cofactor.

In terms of biological role, regulates the transcription of several operons and genes involved in the biogenesis of Fe-S clusters and Fe-S-containing proteins. This is HTH-type transcriptional regulator IscR from Photobacterium profundum (strain SS9).